The sequence spans 246 residues: Cytochrome c oxidase subunit 2 (246 aa).

2 helical membrane-spanning segments follow: residues 31–51 and 72–92; these read HMMYYLALMLGLVSYMLYVMM and IMWTMFPAVMLLLMAFPSFML. Cu cation is bound by residues His-175, Cys-210, Glu-212, Cys-214, His-218, and Met-221. A Mg(2+)-binding site is contributed by Glu-212.

The protein belongs to the cytochrome c oxidase subunit 2 family. As to quaternary structure, component of the cytochrome c oxidase (complex IV, CIV), a multisubunit enzyme composed of a catalytic core of 3 subunits and several supernumerary subunits. The complex exists as a monomer or a dimer and forms supercomplexes (SCs) in the inner mitochondrial membrane with ubiquinol-cytochrome c oxidoreductase (cytochrome b-c1 complex, complex III, CIII). It depends on Cu cation as a cofactor.

It is found in the mitochondrion inner membrane. The enzyme catalyses 4 Fe(II)-[cytochrome c] + O2 + 8 H(+)(in) = 4 Fe(III)-[cytochrome c] + 2 H2O + 4 H(+)(out). In terms of biological role, component of the cytochrome c oxidase, the last enzyme in the mitochondrial electron transport chain which drives oxidative phosphorylation. The respiratory chain contains 3 multisubunit complexes succinate dehydrogenase (complex II, CII), ubiquinol-cytochrome c oxidoreductase (cytochrome b-c1 complex, complex III, CIII) and cytochrome c oxidase (complex IV, CIV), that cooperate to transfer electrons derived from NADH and succinate to molecular oxygen, creating an electrochemical gradient over the inner membrane that drives transmembrane transport and the ATP synthase. Cytochrome c oxidase is the component of the respiratory chain that catalyzes the reduction of oxygen to water. Electrons originating from reduced cytochrome c in the intermembrane space (IMS) are transferred via the dinuclear copper A center (CU(A)) of subunit 2 and heme A of subunit 1 to the active site in subunit 1, a binuclear center (BNC) formed by heme A3 and copper B (CU(B)). The BNC reduces molecular oxygen to 2 water molecules using 4 electrons from cytochrome c in the IMS and 4 protons from the mitochondrial matrix. This is Cytochrome c oxidase subunit 2 (COX2) from Debaryomyces hansenii (strain ATCC 36239 / CBS 767 / BCRC 21394 / JCM 1990 / NBRC 0083 / IGC 2968) (Yeast).